A 1344-amino-acid chain; its full sequence is Myb-binding protein 1A (1344 aa).

The interval 1 to 24 is disordered; sequence MAEMKSPTKAEPATPAEAAQSDRH. An N-acetylalanine modification is found at alanine 2. Residues 2–580 form an interaction with MYB region; the sequence is AEMKSPTKAE…WDQMMSTLKE (579 aa). The segment covering 7–19 has biased composition (low complexity); sequence PTKAEPATPAEAA. 2 positions are modified to N6-acetyllysine: lysine 69 and lysine 156. 2 consecutive short sequence motifs (nuclear export signal) follow at residues 238–256 and 261–279; these read SEDN…ANSV and KLPN…ESRF. 2 disordered regions span residues 710 to 751 and 1146 to 1344; these read DEKQ…DKDV and QRPK…VQTP. The segment covering 732-747 has biased composition (acidic residues); that stretch reads SDMDSEDGEESEEEDR. A compositionally biased stretch (basic and acidic residues) spans 1148-1159; the sequence is PKSEKKNAKDIP. Residue lysine 1149 forms a Glycyl lysine isopeptide (Lys-Gly) (interchain with G-Cter in SUMO2) linkage. A required for nuclear and nucleolar localization region spans residues 1152–1344; sequence KKNAKDIPSD…RVASRRVQTP (193 aa). Serine 1160 and serine 1164 each carry phosphoserine. Residues 1168 to 1185 show a composition bias toward basic residues; the sequence is TKRKKKGFLPETKKRKKL. The residue at position 1187 (serine 1187) is a Phosphoserine. The segment covering 1188–1202 has biased composition (polar residues); it reads EGTTPEKNAASQQDA. A Phosphothreonine modification is found at threonine 1191. Phosphoserine occurs at positions 1219 and 1244. The span at 1249–1258 shows a compositional bias: polar residues; the sequence is NPTLSPSTPA. Position 1251 is a phosphothreonine (threonine 1251). Serine 1253 carries the post-translational modification Phosphoserine. 2 positions are modified to phosphothreonine: threonine 1256 and threonine 1277. Phosphoserine occurs at positions 1280, 1303, and 1318. The span at 1317-1329 shows a compositional bias: low complexity; it reads LSLVSRSPSLLQS. Arginine 1322 carries the post-translational modification Citrulline. Phosphoserine occurs at positions 1323, 1325, and 1329.

Belongs to the MYBBP1A family. Component of the B-WICH complex, at least composed of SMARCA5/SNF2H, BAZ1B/WSTF, SF3B1, DEK, MYO1C, ERCC6, MYBBP1A and DDX21. Binds to and represses JUN and MYB via the leucine zipper regions present in these proteins. Also binds to and represses PPARGC1A: this interaction is abrogated when PPARGC1A is phosphorylated by MAPK1/ERK. Binds to and stimulates transcription by AHR. Binds to KPNA2. Interacts with CLOCK and CRY1. Post-translationally, citrullinated by PADI4. As to expression, ubiquitously expressed.

The protein localises to the nucleus. Its subcellular location is the nucleolus. It localises to the cytoplasm. Its function is as follows. May activate or repress transcription via interactions with sequence specific DNA-binding proteins. Repression may be mediated at least in part by histone deacetylase activity (HDAC activity). Acts as a corepressor and in concert with CRY1, represses the transcription of the core circadian clock component PER2. Preferentially binds to dimethylated histone H3 'Lys-9' (H3K9me2) on the PER2 promoter. Has a role in rRNA biogenesis together with PWP1. In Mus musculus (Mouse), this protein is Myb-binding protein 1A (Mybbp1a).